Reading from the N-terminus, the 355-residue chain is Phosphoribosylformylglycinamidine cyclo-ligase (355 aa).

Belongs to the AIR synthase family.

Its subcellular location is the cytoplasm. The enzyme catalyses 2-formamido-N(1)-(5-O-phospho-beta-D-ribosyl)acetamidine + ATP = 5-amino-1-(5-phospho-beta-D-ribosyl)imidazole + ADP + phosphate + H(+). It functions in the pathway purine metabolism; IMP biosynthesis via de novo pathway; 5-amino-1-(5-phospho-D-ribosyl)imidazole from N(2)-formyl-N(1)-(5-phospho-D-ribosyl)glycinamide: step 2/2. This is Phosphoribosylformylglycinamidine cyclo-ligase from Methylobacterium nodulans (strain LMG 21967 / CNCM I-2342 / ORS 2060).